The sequence spans 916 residues: Protein O-GlcNAcase (916 aa).

Residues 1–50 (MVQKESQAALEERESERNANPASVSGASLEPSAAPAPGEDNPSGAGAAAG) form a disordered region. Residues 60–336 (FLCGVVEGFY…TLATWYKSNM (277 aa)) enclose the GH84 domain. The a protein site is built by glycine 67, lysine 98, and aspartate 174. The active-site Proton donor is the aspartate 175. A protein-binding positions include tyrosine 219, 278–280 (WDN), aspartate 285, and asparagine 313. At serine 364 the chain carries Phosphoserine. The interval 440-480 (QGAALSGEPSALTKEEEKKQPDEEPMDMVVEKQEESEHKSD) is disordered. 2 stretches are compositionally biased toward basic and acidic residues: residues 452-461 (TKEEEKKQPD) and 468-480 (VVEK…HKSD).

It belongs to the glycosyl hydrolase 84 family. In terms of assembly, monomer. Interacts with CLOCK. Proteolytically cleaved by caspase-3 during apoptosis. The fragments interact with each other; cleavage does not decrease enzyme activity. In terms of tissue distribution, detected in spleen (at protein level). Ubiquitous. Expressed at highest levels in the brain and spleen.

It is found in the nucleus. Its subcellular location is the cytoplasm. It carries out the reaction 3-O-(N-acetyl-beta-D-glucosaminyl)-L-seryl-[protein] + H2O = N-acetyl-D-glucosamine + L-seryl-[protein]. It catalyses the reaction 3-O-(N-acetyl-beta-D-glucosaminyl)-L-threonyl-[protein] + H2O = L-threonyl-[protein] + N-acetyl-D-glucosamine. With respect to regulation, inhibited by Cu(2+), Hg(2+), Cd(2+) and Zn(2+) at 1 mM. Not inhibited by Co(2+), Mg(2+), Ca(2+), Mn(2+), Fe(3+) and EDTA. Also inhibited by sodium chloride at 1M and 2-amino-2-hydroxymethyl-1,3-propanediol (trishydroxymethylaminomethane) at 75 mM. Functionally, cleaves GlcNAc but not GalNAc from O-glycosylated proteins. Deglycosylates a large and diverse number of proteins, such as CRYAB, ELK1, GSDMD, LMNB1 and TAB1. Can use p-nitrophenyl-beta-GlcNAc and 4-methylumbelliferone-GlcNAc as substrates but not p-nitrophenyl-beta-GalNAc or p-nitrophenyl-alpha-GlcNAc (in vitro). Does not bind acetyl-CoA and does not have histone acetyltransferase activity. Its function is as follows. Lacks enzyme activity. This Rattus norvegicus (Rat) protein is Protein O-GlcNAcase.